The sequence spans 201 residues: Adenylyl-sulfate kinase (201 aa).

35–42 (GLSGSGKS) provides a ligand contact to ATP. The active-site Phosphoserine intermediate is Ser109.

The protein belongs to the APS kinase family.

The catalysed reaction is adenosine 5'-phosphosulfate + ATP = 3'-phosphoadenylyl sulfate + ADP + H(+). The protein operates within sulfur metabolism; hydrogen sulfide biosynthesis; sulfite from sulfate: step 2/3. Its function is as follows. Catalyzes the synthesis of activated sulfate. The protein is Adenylyl-sulfate kinase of Escherichia coli O139:H28 (strain E24377A / ETEC).